A 656-amino-acid chain; its full sequence is DNA ligase (656 aa).

NAD(+)-binding positions include 32 to 36 (DAIYD) and 81 to 82 (SL). Lys112 (N6-AMP-lysine intermediate) is an active-site residue. Arg133, Glu167, and Lys306 together coordinate NAD(+). Positions 400, 403, 416, and 421 each coordinate Zn(2+). In terms of domain architecture, BRCT spans 577–656 (KSSSVFNNKT…ELLKRLKELD (80 aa)).

This sequence belongs to the NAD-dependent DNA ligase family. LigA subfamily. Requires Mg(2+) as cofactor. Mn(2+) is required as a cofactor.

The enzyme catalyses NAD(+) + (deoxyribonucleotide)n-3'-hydroxyl + 5'-phospho-(deoxyribonucleotide)m = (deoxyribonucleotide)n+m + AMP + beta-nicotinamide D-nucleotide.. DNA ligase that catalyzes the formation of phosphodiester linkages between 5'-phosphoryl and 3'-hydroxyl groups in double-stranded DNA using NAD as a coenzyme and as the energy source for the reaction. It is essential for DNA replication and repair of damaged DNA. The chain is DNA ligase from Helicobacter pylori (strain ATCC 700392 / 26695) (Campylobacter pylori).